The sequence spans 62 residues: MSSTAEEMAAAFEQTGGPDLTTGSGKRTKSDRVEHKHASQPGGDTRKVVQTASNGEAKRKEK.

A disordered region spans residues 1–62 (MSSTAEEMAA…SNGEAKRKEK (62 aa)). A compositionally biased stretch (basic and acidic residues) spans 28 to 37 (TKSDRVEHKH).

This is an uncharacterized protein from Caenorhabditis elegans.